A 155-amino-acid polypeptide reads, in one-letter code: Superoxide dismutase [Cu-Zn] (155 aa).

The Cu cation site is built by H47, H49, and H64. An intrachain disulfide couples C58 to C147. Positions 64, 72, 81, and 84 each coordinate Zn(2+). Residue H121 coordinates Cu cation. R144 is a binding site for substrate.

The protein belongs to the Cu-Zn superoxide dismutase family. Homodimer. Requires Cu cation as cofactor. Zn(2+) is required as a cofactor.

It localises to the cytoplasm. The catalysed reaction is 2 superoxide + 2 H(+) = H2O2 + O2. In terms of biological role, destroys radicals which are normally produced within the cells and which are toxic to biological systems. The polypeptide is Superoxide dismutase [Cu-Zn] (SOD1) (Kluyveromyces lactis (strain ATCC 8585 / CBS 2359 / DSM 70799 / NBRC 1267 / NRRL Y-1140 / WM37) (Yeast)).